The primary structure comprises 512 residues: Glutathione-binding protein GsiB (512 aa).

The first 26 residues, 1–26 (MARAVHRSGLVALGIATALMASCAFA), serve as a signal peptide directing secretion.

Belongs to the bacterial solute-binding protein 5 family. In terms of assembly, the complex is composed of two ATP-binding proteins (GsiA), two transmembrane proteins (GsiC and GsiD) and a solute-binding protein (GsiB).

Its subcellular location is the periplasm. Functionally, part of the ABC transporter complex GsiABCD involved in glutathione import. Binds glutathione. This Escherichia coli O157:H7 protein is Glutathione-binding protein GsiB.